The sequence spans 75 residues: CLAVATA3/ESR (CLE)-related protein 33 (75 aa).

A signal peptide spans 1–22 (MASWRMLCFVLLFTSILICHDA). Hydroxyproline is present on residues Pro-67 and Pro-70. O-linked (Ara...) hydroxyproline glycosylation is present at Pro-70.

This sequence belongs to the CLV3/ESR signal peptide family. The O-glycosylation (arabinosylation) of the hydroxyproline Pro-70 enhances binding affinity of the CLE33p peptide for its receptor. In terms of tissue distribution, expressed in root vasculature.

The protein localises to the secreted. It is found in the extracellular space. Signaling peptide involved in the regulation of root colonization by arbuscular mycorrhizal (AM) fungi. Moves from root to shoot to function with the receptor kinase SUNN, in a signaling pathway that repress strigolactone biosynthetic genes and strigolactone content in the roots, and consequently reduces the promotion of further colonization by AM fungi. The sequence is that of CLAVATA3/ESR (CLE)-related protein 33 from Medicago truncatula (Barrel medic).